The following is a 531-amino-acid chain: CTP synthase (531 aa).

Residues 1-267 (MTKYIIITGG…ASKILSKLNL (267 aa)) are amidoligase domain. Residue serine 13 participates in CTP binding. Serine 13 is a UTP binding site. 14–19 (SVGKGT) contacts ATP. Tyrosine 54 contributes to the L-glutamine binding site. Position 71 (aspartate 71) interacts with ATP. Aspartate 71 and glutamate 141 together coordinate Mg(2+). CTP contacts are provided by residues 148–150 (DIE), 188–193 (KTKPLQ), and lysine 224. UTP is bound by residues 188–193 (KTKPLQ) and lysine 224. The Glutamine amidotransferase type-1 domain occupies 292–531 (KIALVGKYTK…IGFLRAAAGV (240 aa)). Glycine 355 contacts L-glutamine. Cysteine 382 acts as the Nucleophile; for glutamine hydrolysis in catalysis. Residues 383–386 (YGMQ), glutamate 406, and arginine 463 each bind L-glutamine. Catalysis depends on residues histidine 507 and glutamate 509.

It belongs to the CTP synthase family. In terms of assembly, homotetramer.

The enzyme catalyses UTP + L-glutamine + ATP + H2O = CTP + L-glutamate + ADP + phosphate + 2 H(+). The catalysed reaction is L-glutamine + H2O = L-glutamate + NH4(+). It catalyses the reaction UTP + NH4(+) + ATP = CTP + ADP + phosphate + 2 H(+). It functions in the pathway pyrimidine metabolism; CTP biosynthesis via de novo pathway; CTP from UDP: step 2/2. Allosterically activated by GTP, when glutamine is the substrate; GTP has no effect on the reaction when ammonia is the substrate. The allosteric effector GTP functions by stabilizing the protein conformation that binds the tetrahedral intermediate(s) formed during glutamine hydrolysis. Inhibited by the product CTP, via allosteric rather than competitive inhibition. Its function is as follows. Catalyzes the ATP-dependent amination of UTP to CTP with either L-glutamine or ammonia as the source of nitrogen. Regulates intracellular CTP levels through interactions with the four ribonucleotide triphosphates. The sequence is that of CTP synthase from Sulfurisphaera tokodaii (strain DSM 16993 / JCM 10545 / NBRC 100140 / 7) (Sulfolobus tokodaii).